The sequence spans 197 residues: uncharacterized protein (197 aa).

Disordered stretches follow at residues 1-30 (MSDD…PKVV) and 115-174 (PSLK…KQEL). Over residues 21–30 (KPTSTTPKVV) the composition is skewed to low complexity. Residues 123–137 (KVDEDDDQIYEDKEE) are compositionally biased toward acidic residues. The span at 157–170 (KSNKKVAPKQKKKS) shows a compositional bias: basic residues.

This is an uncharacterized protein from Dictyostelium discoideum (Social amoeba).